Reading from the N-terminus, the 245-residue chain is Small ribosomal subunit protein uS2 (245 aa).

Belongs to the universal ribosomal protein uS2 family.

This is Small ribosomal subunit protein uS2 from Dehalococcoides mccartyi (strain CBDB1).